The primary structure comprises 121 residues: Small ribosomal subunit protein uS13 (121 aa).

Residues 89-121 (MRHRRGLPVRGQNTKNNARTRKGKKVSIAGKKK) form a disordered region. Over residues 106-121 (ARTRKGKKVSIAGKKK) the composition is skewed to basic residues.

The protein belongs to the universal ribosomal protein uS13 family. Part of the 30S ribosomal subunit. Forms a loose heterodimer with protein S19. Forms two bridges to the 50S subunit in the 70S ribosome.

Located at the top of the head of the 30S subunit, it contacts several helices of the 16S rRNA. In the 70S ribosome it contacts the 23S rRNA (bridge B1a) and protein L5 of the 50S subunit (bridge B1b), connecting the 2 subunits; these bridges are implicated in subunit movement. Contacts the tRNAs in the A and P-sites. This chain is Small ribosomal subunit protein uS13, found in Latilactobacillus sakei subsp. sakei (strain 23K) (Lactobacillus sakei subsp. sakei).